Here is a 222-residue protein sequence, read N- to C-terminus: MEIPPTNYPASRAALVAQNYINYQQGTPHRVFEVQKVKQASMEDIPGRGHKYHLKFAVEEIIQKQVKVNCTAEVLYPSTGQETAPEVNFTFEGETGKNPDEEDNTFYQRLKSMKEPLEAQNIPDNFGNVSPEMTLVLHLAWVACGYIIWQNSTEDTWYKMVKIQTVKQVQRNDDFIELDYTILLHNIASQEIIPWQMQVLWHPQYGTKVKHNSRLPKEVQLE.

Positions 1–97 constitute a Cystatin LXN-type 1 domain; sequence MEIPPTNYPA…NFTFEGETGK (97 aa). Position 55 is an N6-acetyllysine (Lys55). The interval 98-117 is alpha-helical linker; it reads NPDEEDNTFYQRLKSMKEPL. One can recognise a Cystatin LXN-type 2 domain in the interval 118-222; sequence EAQNIPDNFG…SRLPKEVQLE (105 aa).

Belongs to the protease inhibitor I47 (latexin) family. Highly expressed in heart, prostate, ovary, kidney, pancreas, and colon, moderate or low in other tissues including brain.

Its subcellular location is the cytoplasm. Hardly reversible, non-competitive, and potent inhibitor of CPA1, CPA2 and CPA4. May play a role in inflammation. This is Latexin (LXN) from Homo sapiens (Human).